Here is a 918-residue protein sequence, read N- to C-terminus: Interleukin-6 receptor subunit beta (918 aa).

The signal sequence occupies residues 1–22 (MLTLQTWLVQALFIFLTTESTG). At 23-619 (ELLDPCGYIS…TPKFAQGEIE (597 aa)) the chain is on the extracellular side. Residues 26–120 (DPCGYISPES…LEQNVYGITI (95 aa)) enclose the Ig-like C2-type domain. Cystine bridges form between Cys-28–Cys-54 and Cys-48–Cys-103. Residues Asn-43, Asn-83, and Asn-131 are each glycosylated (N-linked (GlcNAc...) asparagine). Fibronectin type-III domains are found at residues 125–216 (PPEK…NFDP), 224–324 (PPHN…TYED), 329–424 (APSF…FQAT), 426–517 (PVMD…LKQA), and 518–613 (PPSK…TPKF). An intrachain disulfide couples Cys-134 to Cys-144. Asn-157 carries N-linked (GlcNAc...) asparagine glycosylation. A disulfide bond links Cys-172 and Cys-182. An N-linked (GlcNAc...) asparagine glycan is attached at Asn-227. A WSXWS motif motif is present at residues 310–314 (WSDWS). N-linked (GlcNAc...) asparagine glycans are attached at residues Asn-379 and Asn-383. A glycan (N-linked (GlcNAc...) (complex) asparagine) is linked at Asn-390. The cysteines at positions 458 and 466 are disulfide-linked. N-linked (GlcNAc...) asparagine glycans are attached at residues Asn-553 and Asn-564. Residues 620–641 (AIVVPVCLAFLLTTLLGVLFCF) form a helical membrane-spanning segment. Over 642–918 (NKRDLIKKHI…TVRQGGYMPQ (277 aa)) the chain is Cytoplasmic. The Box 1 motif motif lies at 651–659 (IWPNVPDPS). Disordered regions lie at residues 660–681 (KSHIAQWSPHTPPRHNFNSKDQ) and 722–758 (EGHSSGIGGSSCMSSSRPSISSSDENESSQNTSSTVQ). Phosphoserine occurs at positions 661 and 667. A compositionally biased stretch (low complexity) spans 731-755 (SSCMSSSRPSISSSDENESSQNTSS). Phosphoserine is present on residues Ser-782, Ser-789, Ser-829, and Ser-839.

Belongs to the type I cytokine receptor family. Type 2 subfamily. Component of a hexamer of two molecules each of IL6, IL6R and IL6ST; associates with the complex IL6:IL6R but does not interact with IL6. Forms heterodimers composed of LIFR and IL6ST (type I OSM receptor) which are activated by LIF and OSM. Also forms heterodimers composed of OSMR and IL6ST (type II receptor) which are activated by OSM but not by LIF. Component of a receptor complex composed of IL6ST/GP130, IL27RA/WSX1 and CNTFR which interacts with the neuroprotective peptide humanin. Interacts with HCK. Interacts with INPP5D/SHIP1. Interacts with SRC and YES. Interacts with ARMH4; this interaction prevents IL6ST protein homodimerization and bridges ARMH4 with IL6R and STAT3 and therefore inhibits phosphorylation of STAT3 at 'Tyr-705'. In terms of assembly, (Microbial infection) The homodimer binds two molecules of herpes virus 8/HHV-8 protein vIL-6. In terms of processing, phosphorylation of Ser-782 down-regulates cell surface expression. Heavily N-glycosylated. Glycosylation is required for protein stability and localization in plasma membrane but not for ligand binding. As to expression, found in all the tissues and cell lines examined. Expression not restricted to IL6 responsive cells. In terms of tissue distribution, expressed in blood serum (at protein level).

Its subcellular location is the cell membrane. It localises to the secreted. In terms of biological role, signal-transducing molecule. The receptor systems for IL6, LIF, OSM, CNTF, IL11, CTF1 and BSF3 can utilize IL6ST for initiating signal transmission. Binding of IL6 to IL6R induces IL6ST homodimerization and formation of a high-affinity receptor complex, which activates the intracellular JAK-MAPK and JAK-STAT3 signaling pathways. That causes phosphorylation of IL6ST tyrosine residues which in turn activates STAT3. In parallel, the IL6 signaling pathway induces the expression of two cytokine receptor signaling inhibitors, SOCS1 and SOCS3, which inhibit JAK and terminate the activity of the IL6 signaling pathway as a negative feedback loop. Also activates the yes-associated protein 1 (YAP) and NOTCH pathways to control inflammation-induced epithelial regeneration, independently of STAT3. Acts as a receptor for the neuroprotective peptide humanin as part of a complex with IL27RA/WSX1 and CNTFR. Mediates signals which regulate immune response, hematopoiesis, pain control and bone metabolism. Has a role in embryonic development. Essential for survival of motor and sensory neurons and for differentiation of astrocytes. Required for expression of TRPA1 in nociceptive neurons. Required for the maintenance of PTH1R expression in the osteoblast lineage and for the stimulation of PTH-induced osteoblast differentiation. Required for normal trabecular bone mass and cortical bone composition. Functionally, binds to the soluble IL6:sIL6R complex (hyper-IL6), thereby blocking IL6 trans-signaling. Inhibits sIL6R-dependent acute phase response. Also blocks IL11 cluster signaling through IL11R. The protein is Interleukin-6 receptor subunit beta of Homo sapiens (Human).